Consider the following 267-residue polypeptide: Sulfate transporter CysZ (267 aa).

Transmembrane regions (helical) follow at residues 29-49, 73-93, 149-169, and 212-232; these read FVIMPILLNIVLLSGLFWLFI, ILLIFAILMILVLFYFVFTTL, IILFLLGFVPVLGQSVIPIIV, and GLVMLCTFIPLVNLVVIPVAV.

This sequence belongs to the CysZ family.

The protein resides in the cell inner membrane. In terms of biological role, high affinity, high specificity proton-dependent sulfate transporter, which mediates sulfate uptake. Provides the sulfur source for the cysteine synthesis pathway. The protein is Sulfate transporter CysZ of Pasteurella multocida (strain Pm70).